The primary structure comprises 681 residues: Angiomotin-like 2b (681 aa).

Residues G68 to Q84 are compositionally biased toward low complexity. Positions G68–D106 are disordered. Polar residues predominate over residues P90–E102. Y126 carries the phosphotyrosine; by FGFR1 modification. Coiled coils occupy residues N268–G319, I362–T441, and V481–K508. The tract at residues Q589 to R618 is disordered. Polar residues predominate over residues T597–H611. The PDZ-binding signature appears at E678 to I681.

The protein belongs to the angiomotin family. As to quaternary structure, interacts with SRC. In terms of processing, phosphorylation at Tyr-126 is necessary for efficient binding to SRC and synergistically functioning with SRC to activate the downstream MAPK pathway. Expressed in endothelial cells.

The protein localises to the recycling endosome. The protein resides in the cytoplasm. It is found in the cell projection. Its subcellular location is the podosome. It localises to the cell junction. Functionally, required for proper architecture of actin filaments and for cell movements during embryogenesis. Plays a role in the radial actin fiber architecture in skin epithelial cells, thereby maintains cell geometry, size and cell interconnectivity within the skin. Plays an important role in coupling actin fibers to cell junctions in endothelial cells and is therefore required for correct endothelial cell morphology and maintenance of dorsal aorta lumen expansion during embryogenesis. May further play a role in the polarity, proliferation and migration of endothelial cells, and therefore participates in angiogenesis. May regulate the translocation of phosphorylated SRC to peripheral cell-matrix adhesion sites. This chain is Angiomotin-like 2b, found in Danio rerio (Zebrafish).